Here is a 177-residue protein sequence, read N- to C-terminus: Large ribosomal subunit protein uL5 (177 aa).

It belongs to the universal ribosomal protein uL5 family. In terms of assembly, part of the 50S ribosomal subunit; part of the 5S rRNA/L5/L18/L25 subcomplex. Contacts the 5S rRNA and the P site tRNA. Forms a bridge to the 30S subunit in the 70S ribosome.

Functionally, this is one of the proteins that bind and probably mediate the attachment of the 5S RNA into the large ribosomal subunit, where it forms part of the central protuberance. In the 70S ribosome it contacts protein S13 of the 30S subunit (bridge B1b), connecting the 2 subunits; this bridge is implicated in subunit movement. Contacts the P site tRNA; the 5S rRNA and some of its associated proteins might help stabilize positioning of ribosome-bound tRNAs. In Anaplasma phagocytophilum (strain HZ), this protein is Large ribosomal subunit protein uL5.